A 370-amino-acid polypeptide reads, in one-letter code: MSTRAPHILMVGGGTGGHVYPAIAIADAVRALRPDAQIVFAGTQDRLEARAVPEAGYALHPITAQGLQRRAVASNLLLPFRVAQGLVQSWRLVGAIEPDVAVGTGGYVAAPVLMAAWLRGRPLLIQEQNAYAGLTNRVLARLALRIHLAFPEAKDWVPAEHAVVSGNPTRQSLRDADPDAARAAFNVPEDGRVLLVMGGSLGSAAINGAIQRILDPLLAEGDVHVVWQTGTRYYDDLTEDLDEHPRLRVVEYIDQMGHAYAAADLAVCRAGALTCSELTVTGTPAVLVPSPNVTADHQTKNARSLERAGAAVWLDEADLDAHLETVLLDLLGNSDRRARMAEAARDRARPDAAETIARDVLALADRYRTN.

Residues 15–17 (TGG), Asn129, Arg170, Ser200, Ile253, and Gln298 contribute to the UDP-N-acetyl-alpha-D-glucosamine site.

The protein belongs to the glycosyltransferase 28 family. MurG subfamily.

It is found in the cell inner membrane. It catalyses the reaction di-trans,octa-cis-undecaprenyl diphospho-N-acetyl-alpha-D-muramoyl-L-alanyl-D-glutamyl-meso-2,6-diaminopimeloyl-D-alanyl-D-alanine + UDP-N-acetyl-alpha-D-glucosamine = di-trans,octa-cis-undecaprenyl diphospho-[N-acetyl-alpha-D-glucosaminyl-(1-&gt;4)]-N-acetyl-alpha-D-muramoyl-L-alanyl-D-glutamyl-meso-2,6-diaminopimeloyl-D-alanyl-D-alanine + UDP + H(+). Its pathway is cell wall biogenesis; peptidoglycan biosynthesis. Its function is as follows. Cell wall formation. Catalyzes the transfer of a GlcNAc subunit on undecaprenyl-pyrophosphoryl-MurNAc-pentapeptide (lipid intermediate I) to form undecaprenyl-pyrophosphoryl-MurNAc-(pentapeptide)GlcNAc (lipid intermediate II). This is UDP-N-acetylglucosamine--N-acetylmuramyl-(pentapeptide) pyrophosphoryl-undecaprenol N-acetylglucosamine transferase from Salinibacter ruber (strain DSM 13855 / M31).